Consider the following 830-residue polypeptide: Phenylalanine--tRNA ligase beta subunit (830 aa).

Residues 39 to 158 (GQSLDGVVVG…DDTPVGTPFP (120 aa)) form the tRNA-binding domain. Residues 417-492 (PAEKTIALRP…RLHGYDQIPE (76 aa)) enclose the B5 domain. 4 residues coordinate Mg(2+): Asp470, Asp476, Glu479, and Glu480. Positions 490–510 (IPEPERVPVPSRTPEQPPEET) are disordered. Residues 736–828 (SRFPVVDRDL…LAENHGARLR (93 aa)) enclose the FDX-ACB domain.

The protein belongs to the phenylalanyl-tRNA synthetase beta subunit family. Type 1 subfamily. Tetramer of two alpha and two beta subunits. Mg(2+) is required as a cofactor.

The protein resides in the cytoplasm. It catalyses the reaction tRNA(Phe) + L-phenylalanine + ATP = L-phenylalanyl-tRNA(Phe) + AMP + diphosphate + H(+). This chain is Phenylalanine--tRNA ligase beta subunit, found in Salinibacter ruber (strain DSM 13855 / M31).